The sequence spans 282 residues: MVLIGVLASLLILQLSYSKSLDDGAKESAYDDEIQQSSWGNSTVNTTLTETVVIQLIMGGSECYKSKHPFLVYLYNSAGFFCSGTLLNHEWVLTAAHCNRDDIQLKLGVHNVHVHYEDEQIRVPKEKLCCLSTKNCTQWSQDIMLIRLNSSVNNSKHIEPLSLPSRPPSMGSDCTVMGWGTITSPKVTYPKVPHCVDIKILHNPVCQAAYPTMSRKNILCAGVLEGGKDSCKGDSGGPLICDGQIQGIVSWGRFPCAQLLEPGVYTKVFDYIDWIKGIIAGN.

An N-terminal signal peptide occupies residues 1–18 (MVLIGVLASLLILQLSYS). The propeptide occupies 19–56 (KSLDDGAKESAYDDEIQQSSWGNSTVNTTLTETVVIQL). Residues N41 and N45 are each glycosylated (N-linked (GlcNAc...) asparagine). The Peptidase S1 domain maps to 57–280 (IMGGSECYKS…YIDWIKGIIA (224 aa)). Cystine bridges form between C63/C195, C82/C98, C174/C241, C206/C220, and C231/C256. The Charge relay system role is filled by H97. An N-linked (GlcNAc...) asparagine glycan is attached at N135. Residue D142 is the Charge relay system of the active site. 2 N-linked (GlcNAc...) asparagine glycosylation sites follow: N149 and N153. Catalysis depends on S235, which acts as the Charge relay system.

It belongs to the peptidase S1 family. Snake venom subfamily. As to quaternary structure, monomer. In terms of tissue distribution, expressed by the venom gland.

It is found in the secreted. Functionally, snake venom serine protease that may act in the hemostasis system of the prey. This is Snake venom serine protease BmSP from Bungarus multicinctus (Many-banded krait).